A 130-amino-acid chain; its full sequence is Ribonuclease VapC46 (130 aa).

Positions I4–A118 constitute a PINc domain. Residues D7 and D91 each coordinate Mg(2+).

It belongs to the PINc/VapC protein family. Mg(2+) serves as cofactor.

Toxic component of a type II toxin-antitoxin (TA) system. An RNase. Upon expression in M.smegmatis inhibits colony formation. Its toxic effect is neutralized by coexpression with cognate antitoxin VapB46. This is Ribonuclease VapC46 from Mycobacterium tuberculosis (strain ATCC 25618 / H37Rv).